The primary structure comprises 481 residues: MLNEGIINKIYDSVVEVLGLKNAKYGEMILFSKNIKGIVFSLNKKNVNIIILNNYNELTQGEKCYCTNKIFEVPVGKQLIGRIINSRGETLDLLPEIKINEFSPIEKIAPGVMDRETVNEPLLTGIKSIDSMIPIGKGQRELIIGDRQTGKTTICIDTIINQKNKNIICVYVCIGQKISSLINIINKLKKFNCLEYTIIVASTASDSAAEQYIAPYTGSTISEYFRDKGQDCLIVYDDLTKHAWAYRQISLLLRRPPGREAYPGDVFYLHSRLLERSSKVNKFFVNKKSNILKAGSLTAFPIIETLEGDVTSFIPTNVISITDGQIFLDTNLFNSGIRPSINVGLSVSRVGGAAQYKIIKKLSGDIRIMLAQYRELEAFSKFSSDLDSETKNQLIIGEKITILMKQNIHDVYDIFELILILLIIKHDFFRLIPINQVEYFENKIINYLRKIKFKNQIEIDNKNLENCLNELISFFISNSIL.

Residue 145–152 participates in ATP binding; the sequence is GDRQTGKT.

This sequence belongs to the ATPase alpha/beta chains family. F-type ATPases have 2 components, CF(1) - the catalytic core - and CF(0) - the membrane proton channel. CF(1) has five subunits: alpha(3), beta(3), gamma(1), delta(1), epsilon(1). CF(0) has three main subunits: a(1), b(2) and c(9-12). The alpha and beta chains form an alternating ring which encloses part of the gamma chain. CF(1) is attached to CF(0) by a central stalk formed by the gamma and epsilon chains, while a peripheral stalk is formed by the delta and b chains.

The protein localises to the cell membrane. It carries out the reaction ATP + H2O + 4 H(+)(in) = ADP + phosphate + 5 H(+)(out). Functionally, produces ATP from ADP in the presence of a proton gradient across the membrane. The alpha chain is a regulatory subunit. The polypeptide is ATP synthase subunit alpha (Carsonella ruddii (strain PV)).